Reading from the N-terminus, the 1234-residue chain is MLIRWKSKDKSASSNQSVGGSSSSSSKKKRKGREGEEDWQNEAKSGRLPSNEQGGDERRRAMRRDDPRRHTLGGDMLVYGSQHPHAHQMAPQQQRAMDLEMSTRAQKNKKNQPMRGYAPVNQGPLFDDDPGIMSEVETASTGFRRGGKQRSSLPVVRTPSKTLERPLGLVFLQYRSETKRALLPNEITSIDTVRALFVRSFPRQLTMSYLEGPNVKIYIHDASKDMFYELEDVRSHLREIRDRSVLRLFESTEVAAPPQILPGGPGIPQPLPQAQANWDQDQSYFSEPEFDSDYKHQHIHKSKIGKQPAPYYVGSSQTLPRGMYSSERNKVSMDGYTSSPERSSRGNYEEPYYSQYGTRGAVVAPIIDEEQSDGTMTEDQYALYGIKVGPGPNRLTHRGNQIYDPTRPEDLHRIRVEHMERQLANLTGLVQKALVNQNPQIAPLAVPTLDPNYLVVPSQMQANGSGDELYIREKAPKLGKNSCQKSVSFEKSVSFSDDIQGIPKSHNPLHAAETKPTKPAIKSSTLPRTSSQERDRLKPPPPPKPIVLAQTAHPNYRADIALAPEVYNHLRGLQKKAKDLRMEVRTLRRLSQAQAVAVREDIKGTFMRIRATLLASSGSFWDHQGDQDATRISREEELYKQEVIRLEKDLSDLEGSVENLRGEVINRRTRVNMTAVEDMALVLSRASKTVAELKLKFPSLSNGLRCILSNEMEKVVREEKFLKEEPDRLESALRRCKKLTGTLVTLKRLASVQEQRLPPNEPTISEETPRSADISAPDKPIPTPRMGSFALSGGLAPENALDALLDELKTFSKPIAQQQQQQQQQQQQQQQQHQHQQLYEIRPEDSASDESAQAAVQSTVTTQISQARLYTEASVNVQQATTGSMVIAVASGTVSAQAQAQRGVLTHQQSQSQAQLMVHTNMGSLRRLHSYPSESDGELPGPPPTGPRASETSSSTSLANGGSSSKPPVPERNAELITKVGHKRIPPPPPPRTSSRSPLASPTSPNVPPNQAAAATVNLIPNSNSNASANANANANSNATGNKGIVGETTSVVSGDTSSGDNSSGNESGNDHVQRQVALEMRHQELLKKQKMLQEQYQRLQQMSKLPSVDVASSSSSSAQDIASGSNTLRKLGSETNIQQKIAALSLACETSGAAAAAAAAAAAAATNGGVVASDATSGAIGGGGGAGAAGAAGASAAAAHSNSNSNSNLNLNLNSQHQTATTTTKQLYETEIL.

A compositionally biased stretch (basic and acidic residues) spans 1 to 11 (MLIRWKSKDKS). Disordered regions lie at residues 1 to 88 (MLIR…HAHQ), 107 to 129 (KNKKNQPMRGYAPVNQGPLFDDD), and 330 to 350 (KVSMDGYTSSPERSSRGNYEE). The segment covering 12–25 (ASSNQSVGGSSSSS) has biased composition (low complexity). A compositionally biased stretch (basic and acidic residues) spans 55-69 (GDERRRAMRRDDPRR). The stretch at 412–436 (HRIRVEHMERQLANLTGLVQKALVN) forms a coiled coil. A disordered region spans residues 498–548 (DIQGIPKSHNPLHAAETKPTKPAIKSSTLPRTSSQERDRLKPPPPPKPIVL). 2 coiled-coil regions span residues 565 to 594 (EVYNHLRGLQKKAKDLRMEVRTLRRLSQAQ) and 630 to 666 (TRISREEELYKQEVIRLEKDLSDLEGSVENLRGEVIN). 4 disordered regions span residues 754 to 793 (EQRLPPNEPTISEETPRSADISAPDKPIPTPRMGSFALSG), 815 to 852 (IAQQQQQQQQQQQQQQQQHQHQQLYEIRPEDSASDESA), 928 to 1011 (LHSY…PPNQ), and 1028 to 1070 (SANA…ESGN). 5 stretches are compositionally biased toward low complexity: residues 817-837 (QQQQQQQQQQQQQQQQHQHQQ), 952-965 (TSSSTSLANGGSSS), 993-1004 (TSSRSPLASPTS), 1028-1039 (SANANANANSNA), and 1046-1068 (VGETTSVVSGDTSSGDNSSGNES). Residues 1077 to 1105 (VALEMRHQELLKKQKMLQEQYQRLQQMSK) adopt a coiled-coil conformation.

The chain is Coiled-coil domain-containing protein CG32809 from Drosophila melanogaster (Fruit fly).